A 706-amino-acid polypeptide reads, in one-letter code: Dual specificity calcium/calmodulin-dependent 3',5'-cyclic nucleotide phosphodiesterase 1C (706 aa).

An N-acetylmethionine modification is found at M1. The tract at residues 123–146 (EKPRFKSIVHAVQAGIFVERMYRR) is calmodulin-binding. Positions 151–528 (VGLSYPPAVI…ERWRAKVPKE (378 aa)) constitute a PDEase domain. H228 (proton donor) is an active-site residue. The Zn(2+) site is built by H232, H268, D269, and D376. Residue D269 coordinates Mg(2+). 2 disordered regions span residues 453-497 (LIDE…INNS) and 524-655 (KVPK…IKPP). 2 stretches are compositionally biased toward polar residues: residues 456–476 (ESSQ…INSS) and 483–497 (VKSS…INNS). Basic and acidic residues-rich tracts occupy residues 524–554 (KVPK…EAKS), 580–597 (RKGD…KAGE), and 603–630 (DLKD…DGTK). Positions 638-647 (APSTSSTSRI) are enriched in polar residues.

Belongs to the cyclic nucleotide phosphodiesterase family. PDE1 subfamily. Homodimer. Zn(2+) is required as a cofactor. The cofactor is Mg(2+). As to expression, highly expressed in testis and at moderate levels in heart. In terms of tissue distribution, expressed at a moderate level in brain, the cerebellum, testis, heart and olfactory epithelium. Highly expressed in olfactory epithelium and at very low levels, if any, in other tissues. In the cochlea, expressed in the inner and outer hair cells (at protein level). In the brain, highly expressed in the neurons of the granule layer of the cerebellum, some Purkinje cells, the central amygdaloid nucleus, and the interpolar spinal trigem nucleus and, at moderate levels, in the glomerular and external plexiform layer of the olfactory bulb as well as in parts of the caudate-putamen and olfactory tubercle.

It is found in the lysosome. It catalyses the reaction a nucleoside 3',5'-cyclic phosphate + H2O = a nucleoside 5'-phosphate + H(+). The enzyme catalyses 3',5'-cyclic GMP + H2O = GMP + H(+). The catalysed reaction is 3',5'-cyclic AMP + H2O = AMP + H(+). With respect to regulation, type I PDE are activated by the binding of calmodulin in the presence of Ca(2+). Different splice variants may have different sensitivities to Ca(2+). Exhibits a higher sensitivity to Ca(2+) stimulation than isoforms 1 and 2. Calmodulin-dependent cyclic nucleotide phosphodiesterase with a dual specificity for cAMP and cGMP, which are key regulators of many important physiological processes. Exhibits high affinity for both cAMP and cGMP. Modulates the amplitude and duration of the cAMP signal in sensory cilia in response to odorant stimulation, hence contributing to the generation of action potentials. Regulates smooth muscle cell proliferation. Regulates the stability of growth factor receptors, including PDGFRB. In Mus musculus (Mouse), this protein is Dual specificity calcium/calmodulin-dependent 3',5'-cyclic nucleotide phosphodiesterase 1C.